A 421-amino-acid polypeptide reads, in one-letter code: Divalent metal cation transporter MntH (421 aa).

The next 11 membrane-spanning stretches (helical) occupy residues 27–47 (LGPA…ATNI), 51–71 (SLFD…AIFL), 100–120 (WFLW…EFLG), 128–148 (LFHI…FAIV), 160–180 (GIIF…LFIA), 201–221 (AMLI…IYLH), 248–268 (ILVA…VSAA), 289–309 (PLLG…SGFS), 337–357 (LVTM…LKSL), 358–378 (IVSQ…LLLI), and 396–416 (IMGV…LYLT).

The protein belongs to the NRAMP family.

It localises to the cell membrane. Functionally, h(+)-stimulated, divalent metal cation uptake system. The protein is Divalent metal cation transporter MntH of Caldanaerobacter subterraneus subsp. tengcongensis (strain DSM 15242 / JCM 11007 / NBRC 100824 / MB4) (Thermoanaerobacter tengcongensis).